The chain runs to 290 residues: Putative tyrosine recombinase TTE1313 (290 aa).

A Core-binding (CB) domain is found at 1–85; the sequence is MAESVVGEFL…SIKAFYHYLF (85 aa). The Tyr recombinase domain maps to 106 to 290; it reads KEPVTLTVEQ…EVYNKFHPRA (185 aa). The active site involves arginine 239. Tyrosine 283 (O-(3'-phospho-DNA)-tyrosine intermediate) is an active-site residue.

It belongs to the 'phage' integrase family.

It localises to the cytoplasm. In terms of biological role, site-specific tyrosine recombinase, which acts by catalyzing the cutting and rejoining of the recombining DNA molecules. In Caldanaerobacter subterraneus subsp. tengcongensis (strain DSM 15242 / JCM 11007 / NBRC 100824 / MB4) (Thermoanaerobacter tengcongensis), this protein is Putative tyrosine recombinase TTE1313.